The chain runs to 165 residues: Interferon gamma (165 aa).

The first 23 residues, 1–23, serve as a signal peptide directing secretion; it reads MKYTSYILAFQLCIVLGSLGCYC. Glutamine 24 carries the pyrrolidone carboxylic acid modification. N-linked (GlcNAc...) asparagine glycosylation is found at asparagine 48 and asparagine 120.

This sequence belongs to the type II (or gamma) interferon family. In terms of assembly, homodimer. Interacts with IFNGR1 (via extracellular domain); this interaction promotes IFNGR1 dimerization. In terms of tissue distribution, released primarily from activated T lymphocytes.

The protein localises to the secreted. In terms of biological role, type II interferon produced by immune cells such as T-cells and NK cells that plays crucial roles in antimicrobial, antiviral, and antitumor responses by activating effector immune cells and enhancing antigen presentation. Primarily signals through the JAK-STAT pathway after interaction with its receptor IFNGR1 to affect gene regulation. Upon IFNG binding, IFNGR1 intracellular domain opens out to allow association of downstream signaling components JAK2, JAK1 and STAT1, leading to STAT1 activation, nuclear translocation and transcription of IFNG-regulated genes. Many of the induced genes are transcription factors such as IRF1 that are able to further drive regulation of a next wave of transcription. Plays a role in class I antigen presentation pathway by inducing a replacement of catalytic proteasome subunits with immunoproteasome subunits. In turn, increases the quantity, quality, and repertoire of peptides for class I MHC loading. Increases the efficiency of peptide generation also by inducing the expression of activator PA28 that associates with the proteasome and alters its proteolytic cleavage preference. Up-regulates as well MHC II complexes on the cell surface by promoting expression of several key molecules such as cathepsins B/CTSB, H/CTSH, and L/CTSL. Participates in the regulation of hematopoietic stem cells during development and under homeostatic conditions by affecting their development, quiescence, and differentiation. The sequence is that of Interferon gamma (IFNG) from Macaca fascicularis (Crab-eating macaque).